The following is a 325-amino-acid chain: Elongation factor P--(R)-beta-lysine ligase (325 aa).

Ser-76–Glu-78 is a binding site for substrate. Residues Arg-100 to Glu-102 and Asn-109 each bind ATP. Tyr-118 contributes to the substrate binding site. Glu-244–Leu-245 is a binding site for ATP. Position 251 (Glu-251) interacts with substrate. Gly-300 provides a ligand contact to ATP.

This sequence belongs to the class-II aminoacyl-tRNA synthetase family. EpmA subfamily. As to quaternary structure, homodimer.

It carries out the reaction D-beta-lysine + L-lysyl-[protein] + ATP = N(6)-((3R)-3,6-diaminohexanoyl)-L-lysyl-[protein] + AMP + diphosphate + H(+). With EpmB is involved in the beta-lysylation step of the post-translational modification of translation elongation factor P (EF-P). Catalyzes the ATP-dependent activation of (R)-beta-lysine produced by EpmB, forming a lysyl-adenylate, from which the beta-lysyl moiety is then transferred to the epsilon-amino group of a conserved specific lysine residue in EF-P. The chain is Elongation factor P--(R)-beta-lysine ligase from Klebsiella pneumoniae subsp. pneumoniae (strain ATCC 700721 / MGH 78578).